The sequence spans 754 residues: Lysophospholipase 3 (754 aa).

Residues 1 to 19 form the signal peptide; the sequence is MKVNLKLIIGSILISQAQA. 2 stretches are compositionally biased toward low complexity: residues 25 to 40 and 50 to 88; these read SSGS…SETG and LFGS…SSNS. Residues 25-88 are disordered; sequence SSGSSSSSDS…DSSLFSSSNS (64 aa). N-linked (GlcNAc...) asparagine glycosylation is found at asparagine 112, asparagine 156, asparagine 174, asparagine 317, asparagine 325, asparagine 354, asparagine 391, asparagine 423, asparagine 470, asparagine 510, asparagine 515, asparagine 560, asparagine 577, asparagine 597, asparagine 625, and asparagine 631. The 557-residue stretch at 114-670 folds into the PLA2c domain; the sequence is TCPSKKTFIR…QEYCWTGGFK (557 aa). The span at 687–721 shows a compositional bias: low complexity; the sequence is KTHTSGGTSSTTQQTSTTTGSSANGGSSSTGSSSS. A disordered region spans residues 687–727; the sequence is KTHTSGGTSSTTQQTSTTTGSSANGGSSSTGSSSSSKKKNG.

This sequence belongs to the lysophospholipase family.

It is found in the secreted. It catalyses the reaction a 1-acyl-sn-glycero-3-phosphocholine + H2O = sn-glycerol 3-phosphocholine + a fatty acid + H(+). Functionally, catalyzes the release of fatty acids from lysophospholipids. Phospholipase B may well contribute to pathogenicity by abetting the fungus in damaging and traversing host cell membranes, processes which likely increase the rapidity of disseminated infection. The polypeptide is Lysophospholipase 3 (PLB3) (Candida albicans (Yeast)).